The sequence spans 149 residues: Deoxyuridine 5'-triphosphate nucleotidohydrolase (149 aa).

Substrate-binding positions include 68-70 (RSG), N81, 85-87 (LID), and M95.

The protein belongs to the dUTPase family. It depends on Mg(2+) as a cofactor.

It carries out the reaction dUTP + H2O = dUMP + diphosphate + H(+). The protein operates within pyrimidine metabolism; dUMP biosynthesis; dUMP from dCTP (dUTP route): step 2/2. This enzyme is involved in nucleotide metabolism: it produces dUMP, the immediate precursor of thymidine nucleotides and it decreases the intracellular concentration of dUTP so that uracil cannot be incorporated into DNA. This is Deoxyuridine 5'-triphosphate nucleotidohydrolase from Bordetella avium (strain 197N).